The following is a 156-amino-acid chain: Transcription elongation factor GreA (156 aa).

It belongs to the GreA/GreB family.

In terms of biological role, necessary for efficient RNA polymerase transcription elongation past template-encoded arresting sites. The arresting sites in DNA have the property of trapping a certain fraction of elongating RNA polymerases that pass through, resulting in locked ternary complexes. Cleavage of the nascent transcript by cleavage factors such as GreA or GreB allows the resumption of elongation from the new 3'terminus. GreA releases sequences of 2 to 3 nucleotides. This Thermomicrobium roseum (strain ATCC 27502 / DSM 5159 / P-2) protein is Transcription elongation factor GreA.